The chain runs to 883 residues: Serine/threonine-protein kinase greatwall (883 aa).

An N-acetylmethionine modification is found at M1. The Protein kinase domain maps to 35-839 (FTIVKPISRG…IKELKCHPLF (805 aa)). ATP-binding positions include 41-49 (ISRGAFGKV) and K62. The active-site Proton acceptor is the D156. 2 positions are modified to phosphothreonine: T209 and T224. Residues S295, S373, and S456 each carry the phosphoserine modification. Phosphothreonine is present on T523. Phosphoserine is present on residues S555, S559, S634, S661, and S672. T726 carries the phosphothreonine modification. Position 729 is a phosphoserine (S729). The residue at position 745 (T745) is a Phosphothreonine; by CDK1. The region spanning 840-883 (SDVDWENLQHQTMPFIPQPDDETDTSYFEARNNAQHLTVSGFSL) is the AGC-kinase C-terminal domain. Phosphoserine occurs at positions 879 and 882.

The protein belongs to the protein kinase superfamily. AGC Ser/Thr protein kinase family. Post-translationally, phosphorylation at Thr-745 by CDK1 during M phase activates its kinase activity. Maximum phosphorylation occurs in prometaphase.

It is found in the cytoplasm. The protein localises to the cytoskeleton. Its subcellular location is the microtubule organizing center. The protein resides in the centrosome. It localises to the nucleus. It catalyses the reaction L-seryl-[protein] + ATP = O-phospho-L-seryl-[protein] + ADP + H(+). The enzyme catalyses L-threonyl-[protein] + ATP = O-phospho-L-threonyl-[protein] + ADP + H(+). Serine/threonine kinase that plays a key role in M phase by acting as a regulator of mitosis entry and maintenance. Acts by promoting the inactivation of protein phosphatase 2A (PP2A) during M phase: does not directly inhibit PP2A but acts by mediating phosphorylation and subsequent activation of ARPP19 and ENSA at 'Ser-62' and 'Ser-67', respectively. ARPP19 and ENSA are phosphatase inhibitors that specifically inhibit the PPP2R2D (PR55-delta) subunit of PP2A. Inactivation of PP2A during M phase is essential to keep cyclin-B1-CDK1 activity high. Following DNA damage, it is also involved in checkpoint recovery by being inhibited. The protein is Serine/threonine-protein kinase greatwall (MASTL) of Canis lupus familiaris (Dog).